The primary structure comprises 432 residues: Enolase (432 aa).

A (2R)-2-phosphoglycerate-binding site is contributed by glutamine 163. Glutamate 205 (proton donor) is an active-site residue. Mg(2+) contacts are provided by aspartate 242, glutamate 285, and aspartate 312. Lysine 337, arginine 366, serine 367, and lysine 388 together coordinate (2R)-2-phosphoglycerate. The Proton acceptor role is filled by lysine 337.

Belongs to the enolase family. Mg(2+) serves as cofactor.

It is found in the cytoplasm. The protein localises to the secreted. It localises to the cell surface. The enzyme catalyses (2R)-2-phosphoglycerate = phosphoenolpyruvate + H2O. It functions in the pathway carbohydrate degradation; glycolysis; pyruvate from D-glyceraldehyde 3-phosphate: step 4/5. Functionally, catalyzes the reversible conversion of 2-phosphoglycerate (2-PG) into phosphoenolpyruvate (PEP). It is essential for the degradation of carbohydrates via glycolysis. This chain is Enolase, found in Desulfovibrio desulfuricans (strain ATCC 27774 / DSM 6949 / MB).